A 1083-amino-acid chain; its full sequence is Probable arabinosyltransferase B (1083 aa).

13 helical membrane-spanning segments follow: residues Val-23–Leu-45, Phe-222–Trp-239, Leu-252–Trp-274, Ser-331–Ser-350, Leu-357–Trp-379, Thr-421–Gly-443, Ala-456–Phe-478, Phe-525–Leu-542, Ala-555–Ala-572, Trp-576–Val-598, Ala-611–Val-633, Asp-648–Leu-670, and Phe-690–Gly-712.

This sequence belongs to the emb family.

The protein localises to the cell membrane. Its function is as follows. Arabinosyl transferase responsible for the polymerization of arabinose into the arabinan of arabinogalactan. The polypeptide is Probable arabinosyltransferase B (embB) (Mycobacterium leprae (strain TN)).